The chain runs to 428 residues: Histidine--tRNA ligase (428 aa).

This sequence belongs to the class-II aminoacyl-tRNA synthetase family.

It localises to the cytoplasm. It catalyses the reaction tRNA(His) + L-histidine + ATP = L-histidyl-tRNA(His) + AMP + diphosphate + H(+). The polypeptide is Histidine--tRNA ligase (Sulfolobus acidocaldarius (strain ATCC 33909 / DSM 639 / JCM 8929 / NBRC 15157 / NCIMB 11770)).